Here is a 475-residue protein sequence, read N- to C-terminus: Ribulose bisphosphate carboxylase large chain (475 aa).

Residues 1–2 constitute a propeptide that is removed on maturation; the sequence is MS. Position 3 is an N-acetylproline (proline 3). Lysine 14 carries the post-translational modification N6,N6,N6-trimethyllysine. Positions 123 and 173 each coordinate substrate. Residue lysine 175 is the Proton acceptor of the active site. Lysine 177 provides a ligand contact to substrate. 3 residues coordinate Mg(2+): lysine 201, aspartate 203, and glutamate 204. Lysine 201 bears the N6-carboxylysine mark. The active-site Proton acceptor is the histidine 294. Substrate is bound by residues arginine 295, histidine 327, and serine 379.

Belongs to the RuBisCO large chain family. Type I subfamily. As to quaternary structure, heterohexadecamer of 8 large chains and 8 small chains; disulfide-linked. The disulfide link is formed within the large subunit homodimers. Requires Mg(2+) as cofactor. The disulfide bond which can form in the large chain dimeric partners within the hexadecamer appears to be associated with oxidative stress and protein turnover.

Its subcellular location is the plastid. The protein localises to the chloroplast. It carries out the reaction 2 (2R)-3-phosphoglycerate + 2 H(+) = D-ribulose 1,5-bisphosphate + CO2 + H2O. The enzyme catalyses D-ribulose 1,5-bisphosphate + O2 = 2-phosphoglycolate + (2R)-3-phosphoglycerate + 2 H(+). RuBisCO catalyzes two reactions: the carboxylation of D-ribulose 1,5-bisphosphate, the primary event in carbon dioxide fixation, as well as the oxidative fragmentation of the pentose substrate in the photorespiration process. Both reactions occur simultaneously and in competition at the same active site. The protein is Ribulose bisphosphate carboxylase large chain of Eucalyptus globulus subsp. globulus (Tasmanian blue gum).